We begin with the raw amino-acid sequence, 243 residues long: Pyridoxine 5'-phosphate synthase (243 aa).

A 3-amino-2-oxopropyl phosphate-binding site is contributed by Asn9. 11 to 12 (DH) lines the 1-deoxy-D-xylulose 5-phosphate pocket. Arg20 serves as a coordination point for 3-amino-2-oxopropyl phosphate. The active-site Proton acceptor is His45. 2 residues coordinate 1-deoxy-D-xylulose 5-phosphate: Arg47 and His52. The active-site Proton acceptor is the Glu72. Thr102 lines the 1-deoxy-D-xylulose 5-phosphate pocket. His193 functions as the Proton donor in the catalytic mechanism. Residues Gly194 and 215 to 216 (GH) each bind 3-amino-2-oxopropyl phosphate.

It belongs to the PNP synthase family. As to quaternary structure, homooctamer; tetramer of dimers.

It localises to the cytoplasm. The catalysed reaction is 3-amino-2-oxopropyl phosphate + 1-deoxy-D-xylulose 5-phosphate = pyridoxine 5'-phosphate + phosphate + 2 H2O + H(+). It participates in cofactor biosynthesis; pyridoxine 5'-phosphate biosynthesis; pyridoxine 5'-phosphate from D-erythrose 4-phosphate: step 5/5. Its function is as follows. Catalyzes the complicated ring closure reaction between the two acyclic compounds 1-deoxy-D-xylulose-5-phosphate (DXP) and 3-amino-2-oxopropyl phosphate (1-amino-acetone-3-phosphate or AAP) to form pyridoxine 5'-phosphate (PNP) and inorganic phosphate. The protein is Pyridoxine 5'-phosphate synthase of Escherichia coli O157:H7.